Consider the following 986-residue polypeptide: Resact receptor (986 aa).

The N-terminal stretch at 1-21 is a signal peptide; it reads MATTRLLFLLVVAVMITMVRS. Over 22-507 the chain is Extracellular; the sequence is ATLHYNPTVI…GELCTNWGLY (486 aa). N-linked (GlcNAc...) asparagine glycosylation is found at Asn-185, Asn-361, and Asn-410. A helical transmembrane segment spans residues 508–528; that stretch reads LGTLIPAFIIIFGGGLGYYIY. Topologically, residues 529–986 are cytoplasmic; that stretch reads RKRAYEAALD…SHSCSALHSS (458 aa). The 269-residue stretch at 568–836 folds into the Protein kinase domain; it reads LSAISVISNA…PNIIEVRTML (269 aa).

The protein localises to the membrane. The enzyme catalyses GTP = 3',5'-cyclic GMP + diphosphate. In terms of biological role, implicated as a cell-surface receptor on spermatozoa for 'resact' a chemotactic peptide, and on various other cells as a receptor for atrial natriuretic peptide. This is Resact receptor from Arbacia punctulata (Punctuate sea urchin).